Consider the following 210-residue polypeptide: Holliday junction branch migration complex subunit RuvA (210 aa).

Residues 1-64 (MIGLIEGRVC…EDAQLLYGFL (64 aa)) are domain I. A domain II region spans residues 65-143 (HPTERDVFRQ…HIQSDMSLLT (79 aa)). Residues 144-154 (EVEQQIGIAAN) form a flexible linker region. The domain III stretch occupies residues 155-210 (SEGVILAEVESALISLGYRDKEAQQAIKAARETDAGQQLVDTQSLLKLTLKQLSNF).

This sequence belongs to the RuvA family. As to quaternary structure, homotetramer. Forms an RuvA(8)-RuvB(12)-Holliday junction (HJ) complex. HJ DNA is sandwiched between 2 RuvA tetramers; dsDNA enters through RuvA and exits via RuvB. An RuvB hexamer assembles on each DNA strand where it exits the tetramer. Each RuvB hexamer is contacted by two RuvA subunits (via domain III) on 2 adjacent RuvB subunits; this complex drives branch migration. In the full resolvosome a probable DNA-RuvA(4)-RuvB(12)-RuvC(2) complex forms which resolves the HJ.

Its subcellular location is the cytoplasm. In terms of biological role, the RuvA-RuvB-RuvC complex processes Holliday junction (HJ) DNA during genetic recombination and DNA repair, while the RuvA-RuvB complex plays an important role in the rescue of blocked DNA replication forks via replication fork reversal (RFR). RuvA specifically binds to HJ cruciform DNA, conferring on it an open structure. The RuvB hexamer acts as an ATP-dependent pump, pulling dsDNA into and through the RuvAB complex. HJ branch migration allows RuvC to scan DNA until it finds its consensus sequence, where it cleaves and resolves the cruciform DNA. The protein is Holliday junction branch migration complex subunit RuvA of Psychrobacter sp. (strain PRwf-1).